Reading from the N-terminus, the 150-residue chain is MRCVVYSIAKNSPLELVKSYQKQCKRFDCELELVDLFPKNTANAQKVSKELAQKSYSLAFEPYLSPKAKNIALHPEAQRGDSFAFSKMLENHLNINFFIAGAYGFEEKFLKDCQAWSLSEMTFSHEVAKIVLCEQIYRALSIIFKHPYHK.

S-adenosyl-L-methionine is bound by residues alanine 100 and 118-123; that span reads LSEMTF.

It belongs to the RNA methyltransferase RlmH family. Homodimer.

It localises to the cytoplasm. It carries out the reaction pseudouridine(1915) in 23S rRNA + S-adenosyl-L-methionine = N(3)-methylpseudouridine(1915) in 23S rRNA + S-adenosyl-L-homocysteine + H(+). Its function is as follows. Specifically methylates the pseudouridine at position 1915 (m3Psi1915) in 23S rRNA. In Helicobacter pylori (strain J99 / ATCC 700824) (Campylobacter pylori J99), this protein is Ribosomal RNA large subunit methyltransferase H.